Reading from the N-terminus, the 1333-residue chain is Partitioning defective 3 homolog (1333 aa).

Phosphoserine is present on Ser25. Thr91 is modified (phosphothreonine). The segment at 143–262 is disordered; that stretch reads SSDPALTGLS…VGHADTGLEN (120 aa). 2 stretches are compositionally biased toward polar residues: residues 150 to 163 and 171 to 187; these read GLST…FSSE and TRWS…TAGS. Phosphoserine occurs at positions 156 and 174. The span at 190 to 203 shows a compositional bias: basic and acidic residues; it reads TCDRKKDENYRSLP. Positions 207–224 are enriched in polar residues; it reads SSWSNQFQRDNARSSLSA. One can recognise a PDZ 1 domain in the interval 271 to 359; that stretch reads MVKLVQVPND…ARVIWFHVVP (89 aa). 2 disordered regions span residues 369–388 and 397–441; these read LSQR…DSHC and NAPQ…APPS. The residue at position 383 (Ser383) is a Phosphoserine. 2 PDZ domains span residues 461-546 and 590-677; these read NIQL…LVFR and EVPL…GMIQ. Position 489 is a phosphotyrosine (Tyr489). Residues Ser692, Ser695, Ser715, Ser728, Ser806, and Ser824 each carry the phosphoserine modification. Interaction with PRKCI and PRKCZ stretches follow at residues 712 to 932 and 712 to 936; these read RRIS…YDKP and RRIS…MVDD. Lys831 carries the N6-acetyllysine modification. Ser834 is subject to Phosphoserine. Lys848 bears the N6-acetyllysine mark. Phosphoserine is present on residues Ser849 and Ser869. 5 disordered regions span residues 861-884, 928-1011, 1024-1071, 1110-1267, and 1283-1333; these read TVDD…KKSS, SYDK…AKKG, KHRK…ERQA, PQSP…LGGH, and QEQR…PFYS. Lys881 is subject to N6-acetyllysine. The interval 931 to 1333 is interaction with FRMD4A; sequence KPMVDDDDEG…TPEKGRPFYS (403 aa). Positions 935–949 are enriched in acidic residues; the sequence is DDDDEGMETLEEDTE. Position 958 is a phosphoserine; by AURKA (Ser958). Phosphoserine is present on residues Ser967 and Ser969. Basic and acidic residues-rich tracts occupy residues 977–1005 and 1026–1039; these read DPEK…EKDK and RKDD…RIKI. Phosphoserine is present on Ser1042. Over residues 1046-1071 the composition is skewed to basic and acidic residues; sequence EEDRVRMKEEQERIQAKTREFRERQA. Residues 1046 to 1078 adopt a coiled-coil conformation; it reads EEDRVRMKEEQERIQAKTREFRERQARERDYAE. The span at 1134-1143 shows a compositional bias: polar residues; that stretch reads PGDSNRSTPS. The segment covering 1144–1171 has biased composition (basic and acidic residues); the sequence is NHDRIQRLRQEFQQAKQDEDVEDRRRTY. 3 coiled-coil regions span residues 1145 to 1168, 1195 to 1218, and 1274 to 1295; these read HDRI…EDRR, VQVQ…YSSL, and MLET…LKKQ. The segment covering 1176 to 1199 has biased composition (low complexity); it reads SWSSSRPASQSGRHSVSVEVQVQR. Polar residues predominate over residues 1215–1236; it reads YSSLPRQSRKNASSISQDSWEQ. Over residues 1283–1292 the composition is skewed to basic and acidic residues; that stretch reads QEQRRKEQQL. A compositionally biased stretch (polar residues) spans 1314–1323; that stretch reads SQVARLNRLQ. Over residues 1324 to 1333 the composition is skewed to basic and acidic residues; that stretch reads TPEKGRPFYS. Position 1327 is an N6-acetyllysine (Lys1327).

This sequence belongs to the PAR3 family. Interacts with PRCKI and CDH5. Interacts (via PDZ 3 domain) with PTEN (via C-terminus). Component of a complex whose core is composed of ARHGAP17, AMOT, PALS1, PATJ and PARD3/PAR3. Interacts with LIMK2, AURKA and AURKB. Component of the Par polarity complex, composed of at least phosphorylated PRKCZ, PARD3 and TIAM1. Interacts with ECT2 and FBF1. Interacts (via PDZ 1 domain) with F11R/JAM1, PARD6A and PARD6B. Part of a complex with PARD6A or PARD6B, PRKCI or PRKCZ and CDC42 or RAC1. Directly interacts with TIAM1 and TIAM2. Interacts with SIRT2. Interacts (via coiled-coil domain) with FRMD4A. Found in a complex with PARD3, CYTH1 and FRMD4A. Interacts with SAPCD2. Interacts with PRKCA. In terms of assembly, interacts with PRKCZ. Acetylated. Deacetylated by SIRT2, thereby inhibiting Schwann cell peripheral myelination. Post-translationally, phosphorylation at Ser-824 by PRKCZ and PRKCI occurs at the most apical tip of epithelial cell-cell contacts during the initial phase of tight junction formation and may promote dissociation of the complex with PARD6. EGF-induced Tyr-1123 phosphorylation mediates dissociation from LIMK2. Phosphorylation by AURKA at Ser-958 is required for the normal establishment of neuronal polarity. Isoform 4 and isoform 5 are phosphorylated during oocyte maturation. As to expression, all isoforms are expressed in heart, while expression in brain is mainly limited to isoform 1, and to isoform 3 to a weaker level.

The protein resides in the cytoplasm. It is found in the endomembrane system. Its subcellular location is the cell junction. It localises to the tight junction. The protein localises to the adherens junction. The protein resides in the cell cortex. It is found in the cytoskeleton. Its subcellular location is the cell membrane. Adapter protein involved in asymmetrical cell division and cell polarization processes. Seems to play a central role in the formation of epithelial tight junctions. Targets the phosphatase PTEN to cell junctions. Association with PARD6B may prevent the interaction of PARD3 with F11R/JAM1, thereby preventing tight junction assembly. The PARD6-PARD3 complex links GTP-bound Rho small GTPases to atypical protein kinase C proteins. Required for establishment of neuronal polarity and normal axon formation in cultured hippocampal neurons. Involved in Schwann cell peripheral myelination. This Mus musculus (Mouse) protein is Partitioning defective 3 homolog (Pard3).